We begin with the raw amino-acid sequence, 110 residues long: Nucleoid-associated protein bbp_426 (110 aa).

Belongs to the YbaB/EbfC family. In terms of assembly, homodimer.

The protein resides in the cytoplasm. It is found in the nucleoid. In terms of biological role, binds to DNA and alters its conformation. May be involved in regulation of gene expression, nucleoid organization and DNA protection. This chain is Nucleoid-associated protein bbp_426, found in Buchnera aphidicola subsp. Baizongia pistaciae (strain Bp).